A 114-amino-acid chain; its full sequence is T-cell leukemia/lymphoma protein 1A (114 aa).

It belongs to the TCL1 family. As to quaternary structure, homodimer. Interacts with AKT1, AKT2 and AKT3 (via PH domain). Interacts with PNPT1; the interaction has no effect on PNPT1 exonuclease activity. Restricted in the T-cell lineage to immature thymocytes and activated peripheral lymphocytes. Preferentially expressed early in T- and B-lymphocyte differentiation.

It is found in the cytoplasm. Its subcellular location is the nucleus. The protein localises to the microsome. The protein resides in the endoplasmic reticulum. Its function is as follows. Enhances the phosphorylation and activation of AKT1, AKT2 and AKT3. Promotes nuclear translocation of AKT1. Enhances cell proliferation, stabilizes mitochondrial membrane potential and promotes cell survival. The protein is T-cell leukemia/lymphoma protein 1A (TCL1A) of Homo sapiens (Human).